The chain runs to 745 residues: MSNLSFFQTLSGLAENAKQIAKSSSLSFEENELSHSDLLRLLNSNSDAGKLEAINFILAQMMHGENMSLYFPDVVKLVASENPEIRRLVHIYLLQYAEFNPDLALLSVNTVQKTLYDKNPLTRSTAIRVMSSIRVPAINGIVLLAIQQCITDTADRVRQSAALAITKCYSLDPSYKSQLEEHIKTLLSDNSPIVVPAALFTFEVVCPEKLEIIHPYYHRICTLFPQMNDWDKVVALKTLVRYARLTLPEPSTPSTHSDLKELLESIKSCFFSLLPSTIIAGARAFYYLAPSNQMHLIVEPLLQLLLEKPIVRTTTLRYISQIVYKTPELFKNHIKSFFLIASDSDDTCLLKINILSRLLDAQNSSQILPELLYYINSHPNPSVASTAVKALGDFASANISMAPSCLNTLLLLLKSHNSLIVTEAASSLRLLIHNDPKEIYLQYLAATYETLEVPRAKSVTLWLISEHILIIPRLVPDVLRIAVKTFADETLEVKYQILELSVRLYVLSHSEEKQNDLESRDDVVSLLFNYVLSLIHFDMSYDLRDRARFYKELASTPSSEFTRRIVLESKGNSQKEIIASRDYCIGTASLCLNEDVMGYEPIPNWADVSDLPPDSVREGIKDVLPINPHTGNIYSNNSPGVKALSSDNFKRDFGDTNAINRPKFVGQQTLEEFYASETSESSEGEYETSTSESEDEETDDTSQEEDNEKNSTPDEDTENNNTSSISTKSIMDRPLTEPEPNYWQS.

Ser-638 carries the phosphoserine modification. Residues Tyr-674–Ser-745 form a disordered region. Positions Glu-680–Glu-718 are enriched in acidic residues.

It belongs to the adaptor complexes large subunit family. As to quaternary structure, adaptor protein complex 3 (AP-3) is a heterotetramer composed of 2 large adaptins (apl5 and apl6), a medium adaptin (apm3) and a small adaptin (aps3).

It is found in the golgi apparatus. The protein resides in the cytoplasmic vesicle. Its subcellular location is the clathrin-coated vesicle membrane. Its function is as follows. Adaptins are components of the adaptor complexes which link clathrin to receptors in coated vesicles. Clathrin-associated protein complexes are believed to interact with the cytoplasmic tails of membrane proteins, leading to their selection and concentration. Beta adaptin is a subunit of the plasma membrane adaptor. This chain is AP-3 complex subunit beta (apl6), found in Schizosaccharomyces pombe (strain 972 / ATCC 24843) (Fission yeast).